Reading from the N-terminus, the 84-residue chain is UPF0473 protein CLI_2624 (84 aa).

This sequence belongs to the UPF0473 family.

This Clostridium botulinum (strain Langeland / NCTC 10281 / Type F) protein is UPF0473 protein CLI_2624.